A 362-amino-acid chain; its full sequence is Ferrochelatase (362 aa).

H228 and E309 together coordinate Fe cation.

It belongs to the ferrochelatase family.

It localises to the cytoplasm. The catalysed reaction is heme b + 2 H(+) = protoporphyrin IX + Fe(2+). Its pathway is porphyrin-containing compound metabolism; protoheme biosynthesis; protoheme from protoporphyrin-IX: step 1/1. In terms of biological role, catalyzes the ferrous insertion into protoporphyrin IX. This chain is Ferrochelatase, found in Bordetella parapertussis (strain 12822 / ATCC BAA-587 / NCTC 13253).